A 525-amino-acid chain; its full sequence is Averantin hydroxylase (525 aa).

Residues 36 to 56 (VLATFVAGIGALLLWTLTTVF) form a helical membrane-spanning segment. N-linked (GlcNAc...) asparagine glycosylation is present at N315. C462 serves as a coordination point for heme.

It belongs to the cytochrome P450 family. Heme serves as cofactor.

It localises to the membrane. It catalyses the reaction (1'S)-averantin + reduced [NADPH--hemoprotein reductase] + O2 = (1'S,5'R)-5'-hydroxyaverantin + oxidized [NADPH--hemoprotein reductase] + H2O. The enzyme catalyses (1'S)-averantin + reduced [NADPH--hemoprotein reductase] + O2 = (1'S,5'S)-5'-hydroxyaverantin + oxidized [NADPH--hemoprotein reductase] + H2O + H(+). It participates in mycotoxin biosynthesis. Functionally, averantin hydroxylase; part of the fragmented gene cluster that mediates the biosynthesis of dothistromin (DOTH), a polyketide toxin very similar in structure to the aflatoxin precursor, versicolorin B. The first step of the pathway is the conversion of acetate to norsolorinic acid (NOR) and requires the fatty acid synthase subunits hexA and hexB, as well as the polyketide synthase pksA. PksA combines a hexanoyl starter unit and 7 malonyl-CoA extender units to synthesize the precursor NOR. The hexanoyl starter unit is provided to the acyl-carrier protein (ACP) domain by the fungal fatty acid synthase hexA/hexB. The second step is the conversion of NOR to averantin (AVN) and requires the norsolorinic acid ketoreductase nor1, which catalyzes the dehydration of norsolorinic acid to form (1'S)-averantin. The cytochrome P450 monooxygenase avnA then catalyzes the hydroxylation of AVN to 5'hydroxyaverantin (HAVN). The next step is performed by adhA that transforms HAVN to averufin (AVF). Averufin might then be converted to hydroxyversicolorone by cypX and avfA. Hydroxyversicolorone is further converted versiconal hemiacetal acetate (VHA) by moxY. VHA is then the substrate for the versiconal hemiacetal acetate esterase est1 to yield versiconal (VAL). Versicolorin B synthase vbsA then converts VAL to versicolorin B (VERB) by closing the bisfuran ring. Then, the activity of the versicolorin B desaturase verB leads to versicolorin A (VERA). DotB, a predicted chloroperoxidase, may perform epoxidation of the A-ring of VERA. Alternatively, a cytochrome P450, such as cypX or avnA could catalyze this step. It is also possible that another, uncharacterized, cytochrome P450 enzyme is responsible for this step. Opening of the epoxide could potentially be achieved by the epoxide hydrolase epoA. However, epoA seems not to be required for DOTH biosynthesis, but other epoxide hydrolases may have the ability to complement this hydrolysis. Alternatively, opening of the epoxide ring could be achieved non-enzymatically. The next step is the deoxygenation of ring A to yield the 5,8-dihydroxyanthraquinone which is most likely catalyzed by the NADPH dehydrogenase encoded by ver1. The last stages of DOTH biosynthesis are proposed to involve hydroxylation of the bisfuran. OrdB and norB might have oxidative roles here. An alternative possibility is that cytochrome P450 monoogenases such as avnA and cypX might perform these steps in addition to previously proposed steps. The protein is Averantin hydroxylase of Dothistroma septosporum (strain NZE10 / CBS 128990) (Red band needle blight fungus).